Consider the following 131-residue polypeptide: Arsenate reductase (131 aa).

Residues C10, C82, and C89 each act as nucleophile in the active site. Disulfide bonds link C10–C82 and C82–C89.

Belongs to the low molecular weight phosphotyrosine protein phosphatase family. Thioredoxin-coupled ArsC subfamily.

The protein localises to the cytoplasm. The catalysed reaction is arsenate + [thioredoxin]-dithiol + H(+) = arsenite + [thioredoxin]-disulfide + H2O. In terms of biological role, catalyzes the reduction of arsenate [As(V)] to arsenite [As(III)]. The protein is Arsenate reductase of Staphylococcus aureus (strain bovine RF122 / ET3-1).